Consider the following 145-residue polypeptide: MTLTNYVQEVSLADFGKPFHHKAYWNKRLKTTGGRFFPKDGHLDFNPRMLEENGELIFRKIVRHELCHYHLYFEGRGYHHKDRDFKDLLAQVNGLRYVPTSSKSKTNHHYSCQTCGQVYQRKRRINLAKYVCGNCHGKLIEKNQS.

In terms of domain architecture, SprT-like spans 4–140 (TNYVQEVSLA…VCGNCHGKLI (137 aa)). Zn(2+) is bound at residue histidine 64. Glutamate 65 is a catalytic residue. Histidine 68 serves as a coordination point for Zn(2+).

The protein belongs to the SprT family. Zn(2+) is required as a cofactor.

The protein localises to the cytoplasm. This is Protein SprT-like from Streptococcus pyogenes serotype M6 (strain ATCC BAA-946 / MGAS10394).